The following is a 582-amino-acid chain: Sorting nexin-4 (582 aa).

Residues methionine 1–glutamine 11 are compositionally biased toward polar residues. Positions methionine 1–glutamine 111 are disordered. Basic and acidic residues-rich tracts occupy residues tryptophan 12–lysine 27 and aspartate 35–glutamate 54. The segment covering asparagine 57–proline 70 has biased composition (acidic residues). The PX domain occupies glutamate 116 to tryptophan 249. 3 residues coordinate a 1,2-diacyl-sn-glycero-3-phospho-(1D-myo-inositol-3-phosphate): arginine 171, lysine 197, and arginine 216. Coiled-coil stretches lie at residues serine 300–lysine 329 and serine 494–isoleucine 529.

This sequence belongs to the sorting nexin family.

The protein resides in the cytoplasm. It localises to the cytosol. The protein localises to the preautophagosomal structure membrane. It is found in the endosome membrane. Functionally, sorting nexin, involved in the separation or division of vacuoles throughout the entire life cycle of the cells. Involved in retrieval of late-Golgi SNAREs from post-Golgi endosomes to the trans-Golgi network, for cytoplasm to vacuole transport (Cvt), and autophagy of large cargos including mitophagy, pexophagy and glycophagy. The sequence is that of Sorting nexin-4 (SNX4) from Debaryomyces hansenii (strain ATCC 36239 / CBS 767 / BCRC 21394 / JCM 1990 / NBRC 0083 / IGC 2968) (Yeast).